The primary structure comprises 565 residues: NAD-dependent malic enzyme (565 aa).

Tyrosine 104 acts as the Proton donor in catalysis. Position 157 (arginine 157) interacts with NAD(+). Lysine 175 (proton acceptor) is an active-site residue. A divalent metal cation contacts are provided by glutamate 246, aspartate 247, and aspartate 270. NAD(+) contacts are provided by aspartate 270 and asparagine 418.

This sequence belongs to the malic enzymes family. Homotetramer. Mg(2+) is required as a cofactor. It depends on Mn(2+) as a cofactor.

The enzyme catalyses (S)-malate + NAD(+) = pyruvate + CO2 + NADH. It carries out the reaction oxaloacetate + H(+) = pyruvate + CO2. This chain is NAD-dependent malic enzyme, found in Yersinia pseudotuberculosis serotype O:1b (strain IP 31758).